Here is a 141-residue protein sequence, read N- to C-terminus: Small ribosomal subunit protein uS8c (141 aa).

The protein belongs to the universal ribosomal protein uS8 family. In terms of assembly, part of the 30S ribosomal subunit.

The protein resides in the plastid. It is found in the chloroplast. In terms of biological role, one of the primary rRNA binding proteins, it binds directly to 16S rRNA central domain where it helps coordinate assembly of the platform of the 30S subunit. This Pleurastrum terricola (Filamentous green alga) protein is Small ribosomal subunit protein uS8c (rps8).